The chain runs to 230 residues: Small ribosomal subunit protein uS3 (230 aa).

The KH type-2 domain maps to 39 to 107 (VRNYLRQKLA…PIHVNIEEIR (69 aa)). Residues 210-230 (SSKPEHESKQRKAGRRNAAAN) are disordered.

It belongs to the universal ribosomal protein uS3 family. Part of the 30S ribosomal subunit. Forms a tight complex with proteins S10 and S14.

Functionally, binds the lower part of the 30S subunit head. Binds mRNA in the 70S ribosome, positioning it for translation. The protein is Small ribosomal subunit protein uS3 of Neisseria gonorrhoeae (strain ATCC 700825 / FA 1090).